Reading from the N-terminus, the 217-residue chain is tRNA (guanine-N(7)-)-methyltransferase (217 aa).

E44, E69, D96, and D118 together coordinate S-adenosyl-L-methionine. D118 is an active-site residue. Substrate contacts are provided by residues K122, D154, and 191–194 (TEYE).

The protein belongs to the class I-like SAM-binding methyltransferase superfamily. TrmB family.

It carries out the reaction guanosine(46) in tRNA + S-adenosyl-L-methionine = N(7)-methylguanosine(46) in tRNA + S-adenosyl-L-homocysteine. Its pathway is tRNA modification; N(7)-methylguanine-tRNA biosynthesis. Functionally, catalyzes the formation of N(7)-methylguanine at position 46 (m7G46) in tRNA. This is tRNA (guanine-N(7)-)-methyltransferase from Bacillus cereus (strain B4264).